The chain runs to 349 residues: S-adenosylmethionine:tRNA ribosyltransferase-isomerase (349 aa).

The protein belongs to the QueA family. In terms of assembly, monomer.

The protein localises to the cytoplasm. The catalysed reaction is 7-aminomethyl-7-carbaguanosine(34) in tRNA + S-adenosyl-L-methionine = epoxyqueuosine(34) in tRNA + adenine + L-methionine + 2 H(+). It functions in the pathway tRNA modification; tRNA-queuosine biosynthesis. Transfers and isomerizes the ribose moiety from AdoMet to the 7-aminomethyl group of 7-deazaguanine (preQ1-tRNA) to give epoxyqueuosine (oQ-tRNA). This chain is S-adenosylmethionine:tRNA ribosyltransferase-isomerase, found in Pseudomonas putida (strain GB-1).